Reading from the N-terminus, the 199-residue chain is MAKILVLYYSSWGHMEAMAMAAARGAGEAGANVTIKRVPELVPEEVARKAHYKLEQEAQIATPLELADYDGFIFGVSTRYGMMSSQLKNFLDQTGPLWAAGKLVNKPATVMVSTATQHGGAEIALASTQLALQHHGMIIVPLSYAYQGQSGNDTVRGGAPYGMTTTSDTDGSRMPSAQELEGARFQGKRLAEITAKLVR.

Positions 4–190 constitute a Flavodoxin-like domain; that stretch reads ILVLYYSSWG…EGARFQGKRL (187 aa). FMN-binding positions include 10 to 15 and 78 to 80; these read SSWGHM and TRY. W12 serves as a coordination point for NAD(+). Residue W98 coordinates substrate. FMN-binding positions include 113 to 119 and H134; that span reads STATQHG. A disordered region spans residues 155–175; sequence VRGGAPYGMTTTSDTDGSRMP.

The protein belongs to the WrbA family. Requires FMN as cofactor.

The enzyme catalyses a quinone + NADH + H(+) = a quinol + NAD(+). It catalyses the reaction a quinone + NADPH + H(+) = a quinol + NADP(+). This chain is NAD(P)H dehydrogenase (quinone), found in Chelativorans sp. (strain BNC1).